A 312-amino-acid chain; its full sequence is MTTNRLQVSLPGLDLKNPIIPASGCFGFGQEYAKYYDLDLLGSIMIKATTLEPRFGNPTPRVAETPAGMLNAIGLQNPGLEVVLAEKLPWLEREYPNLPIIANVAGFSKQEYAAVSHGISKATNVKAIELNISCPNVDHCNHGLLIGQDPDLAYDVVKAAVEASEVPVYVKLTPSVTDIVTVAKAAEDAGASGLTMINTLVGMRFDLKTRKPILANGTGGMSGPAVFPVALKLIRQVAQTTDLPIIGMGGVDSAEAALEMYLAGASAIGVGTANFTNPYACPDIIENLPKVMDKYGISSLEELRQEVKESLR.

FMN contacts are provided by residues serine 23 and 47–48; that span reads KA. Residues lysine 47 and 71–75 each bind substrate; that span reads NAIGL. Asparagine 103 and asparagine 131 together coordinate FMN. Asparagine 131 provides a ligand contact to substrate. The Nucleophile role is filled by cysteine 134. Positions 171 and 197 each coordinate FMN. 198 to 199 provides a ligand contact to substrate; that stretch reads NT. FMN is bound by residues glycine 223, 249-250, and 271-272; these read GG and GT.

Belongs to the dihydroorotate dehydrogenase family. Type 1 subfamily. Heterotetramer of 2 PyrK and 2 PyrD type B subunits. FMN serves as cofactor.

The protein localises to the cytoplasm. The enzyme catalyses (S)-dihydroorotate + NAD(+) = orotate + NADH + H(+). Its pathway is pyrimidine metabolism; UMP biosynthesis via de novo pathway; orotate from (S)-dihydroorotate (NAD(+) route): step 1/1. Its function is as follows. Catalyzes the conversion of dihydroorotate to orotate with NAD(+) as electron acceptor. The protein is Dihydroorotate dehydrogenase B (NAD(+)), catalytic subunit (pyrDB) of Streptococcus pneumoniae serotype 4 (strain ATCC BAA-334 / TIGR4).